We begin with the raw amino-acid sequence, 422 residues long: WD repeat and SOCS box-containing protein 1 (422 aa).

WD repeat units lie at residues 124-165 (SRCV…LLLN), 168-208 (DHTE…NMMK), 212-251 (GHQN…MIRK), 254-293 (GHYN…ILFE), and 309-346 (DNGR…SYPV). One can recognise an SOCS box domain in the interval 374-422 (NAYFWSTPKYVSSLQHLCRMAIRRVMNTNEVKKLPIPQKIMEFLTYQTM).

In terms of assembly, component of a probable ECS E3 ubiquitin-protein ligase complex that contains the Elongin BC complex.

Its pathway is protein modification; protein ubiquitination. Its function is as follows. Probable substrate-recognition component of a SCF-like ECS (Elongin-Cullin-SOCS-box protein) E3 ubiquitin-protein ligase complex which mediates the ubiquitination and subsequent proteasomal degradation of target proteins. This is WD repeat and SOCS box-containing protein 1 (wsb1) from Xenopus tropicalis (Western clawed frog).